The following is a 300-amino-acid chain: tRNA dimethylallyltransferase (300 aa).

Residue 18–25 (GPTATGKS) participates in ATP binding. 20–25 (TATGKS) contacts substrate. The segment at 43–46 (DSRQ) is interaction with substrate tRNA.

Belongs to the IPP transferase family. As to quaternary structure, monomer. The cofactor is Mg(2+).

The enzyme catalyses adenosine(37) in tRNA + dimethylallyl diphosphate = N(6)-dimethylallyladenosine(37) in tRNA + diphosphate. Catalyzes the transfer of a dimethylallyl group onto the adenine at position 37 in tRNAs that read codons beginning with uridine, leading to the formation of N6-(dimethylallyl)adenosine (i(6)A). The protein is tRNA dimethylallyltransferase of Cyanothece sp. (strain PCC 7425 / ATCC 29141).